The sequence spans 625 residues: BTB/POZ domain-containing protein At5g48130 (625 aa).

Residues 41 to 105 form the BTB domain; the sequence is ASVHVRVCNK…IYGCPTLIHP (65 aa). The NPH3 domain maps to 217 to 469; sequence DTWIKDLTDL…VQALFIQQLN (253 aa). The segment covering 494-507 has biased composition (polar residues); sequence VPSSRPLTSQQSPC. Positions 494–513 are disordered; that stretch reads VPSSRPLTSQQSPCTDDETG.

This sequence belongs to the NPH3 family.

The protein operates within protein modification; protein ubiquitination. May act as a substrate-specific adapter of an E3 ubiquitin-protein ligase complex (CUL3-RBX1-BTB) which mediates the ubiquitination and subsequent proteasomal degradation of target proteins. The sequence is that of BTB/POZ domain-containing protein At5g48130 from Arabidopsis thaliana (Mouse-ear cress).